A 314-amino-acid polypeptide reads, in one-letter code: Ribosomal RNA small subunit methyltransferase H (314 aa).

S-adenosyl-L-methionine contacts are provided by residues 36–38, Asp-56, Phe-80, Asp-102, and Gln-109; that span reads GGH. The disordered stretch occupies residues 278–300; that stretch reads GGRSLKSIGKMKPSEEEVADNPR. Over residues 289-300 the composition is skewed to basic and acidic residues; it reads KPSEEEVADNPR.

The protein belongs to the methyltransferase superfamily. RsmH family.

Its subcellular location is the cytoplasm. The catalysed reaction is cytidine(1402) in 16S rRNA + S-adenosyl-L-methionine = N(4)-methylcytidine(1402) in 16S rRNA + S-adenosyl-L-homocysteine + H(+). Specifically methylates the N4 position of cytidine in position 1402 (C1402) of 16S rRNA. The chain is Ribosomal RNA small subunit methyltransferase H from Photorhabdus laumondii subsp. laumondii (strain DSM 15139 / CIP 105565 / TT01) (Photorhabdus luminescens subsp. laumondii).